Consider the following 79-residue polypeptide: RNA-binding protein KhpA (79 aa).

Positions 32–79 constitute a KH domain; it reads TVVIELRVDPAELGKVIGKQGRIARALRTILTAIGRKIGKRVVLEILE.

Belongs to the KhpA RNA-binding protein family.

It localises to the cytoplasm. A probable RNA-binding protein. The sequence is that of RNA-binding protein KhpA from Aquifex aeolicus (strain VF5).